A 228-amino-acid chain; its full sequence is UPF0758 protein Gura_4138 (228 aa).

An MPN domain is found at 106–228; it reads RFTSPSQVFE…FLSFVDRGMM (123 aa). Residues His-177, His-179, and Asp-190 each coordinate Zn(2+). The JAMM motif motif lies at 177 to 190; the sequence is HNHPTGDPTPSRED.

The protein belongs to the UPF0758 family.

This Geotalea uraniireducens (strain Rf4) (Geobacter uraniireducens) protein is UPF0758 protein Gura_4138.